Consider the following 151-residue polypeptide: MELDIKGIMDRLPHRYPMLLIDRVLEMVPGKSIVAIKNVSINEPFFTGHFPHHPVMPGVLIVEAMAQASALFSFTDENGGLKCDGAKTAYYLVGIDGARFRKPVVPGDQLRLEVEAERLSRTICKYQGRALVDGQLVAEAKLMCAIRSLEE.

Residue His49 is part of the active site.

This sequence belongs to the thioester dehydratase family. FabZ subfamily.

The protein localises to the cytoplasm. The catalysed reaction is a (3R)-hydroxyacyl-[ACP] = a (2E)-enoyl-[ACP] + H2O. In terms of biological role, involved in unsaturated fatty acids biosynthesis. Catalyzes the dehydration of short chain beta-hydroxyacyl-ACPs and long chain saturated and unsaturated beta-hydroxyacyl-ACPs. The sequence is that of 3-hydroxyacyl-[acyl-carrier-protein] dehydratase FabZ from Bordetella bronchiseptica (strain ATCC BAA-588 / NCTC 13252 / RB50) (Alcaligenes bronchisepticus).